The chain runs to 921 residues: Protein translocase subunit SecA (921 aa).

ATP is bound by residues Gln-87, 105–109 (GEGKT), and Asp-515. The tract at residues 575–594 (RRIDNQLRGRSGRQGDPGSS) is disordered. Zn(2+) contacts are provided by Cys-905, Cys-907, Cys-916, and Cys-917.

This sequence belongs to the SecA family. As to quaternary structure, monomer and homodimer. Part of the essential Sec protein translocation apparatus which comprises SecA, SecYEG and auxiliary proteins SecDF-YajC and YidC. Zn(2+) is required as a cofactor.

It is found in the cell inner membrane. Its subcellular location is the cytoplasm. It catalyses the reaction ATP + H2O + cellular proteinSide 1 = ADP + phosphate + cellular proteinSide 2.. Its function is as follows. Part of the Sec protein translocase complex. Interacts with the SecYEG preprotein conducting channel. Has a central role in coupling the hydrolysis of ATP to the transfer of proteins into and across the cell membrane, serving both as a receptor for the preprotein-SecB complex and as an ATP-driven molecular motor driving the stepwise translocation of polypeptide chains across the membrane. This Polynucleobacter necessarius subsp. necessarius (strain STIR1) protein is Protein translocase subunit SecA.